We begin with the raw amino-acid sequence, 640 residues long: MKIKVKLPDGKEKEYDRGITPAEIAKELGIKKAIGAVVNGELWDLKRPIENDCELRLVTLEDPEAPEFYRHTMAHILAQAVMRLYGKENVKLGIGPTIENGFYYDFDIKNGRLTEEDLPKIEQEMKKIIKENLPIERKEISKEEARELFRDQPYKLELIEEIEGNRVTIYRQGEFVDLCRGPHLPSTGIVKHFKLLSVSGAYWRGSEKNPMLTRVYGTAFAKKEDLDNYLKFLEEAQRRDHRKLGPQLELFMLNTEYAPGMPFFLPKGVVVLNELMKFSRELHRERGYQEIFTPLIMNEQLWKISGHWDHYAENMYFIEKDEERYAVKPMNCPGHILVYKSRTVSYRDLPLRFFEFGRVHRYERSGVLHGLMRVRSFTQDDAHIFCTPDQIEEEILGVLDLINTIYSQFGFTYRVELSTMPEDHMGDEAIWEKATTALKNALERAGLSYKVNEGEGAFYGPKIDFHIRDSIGREWQCATIQLDFMMPEKFNVTYIGPDNKEHRAVMIHRAIYGSLERFFGILIEHFAGAFPTWLAPIQVAVIPISEKHNDGAEKVARRISQEGFRVFFDNRRETLGYRIRQAQTQKIPYMIIIGDKELESGKISVRTRTGKEIKDVDPEHFVETLRNEVLSRKLELSMEG.

A TGS domain is found at 1–59; that stretch reads MKIKVKLPDGKEKEYDRGITPAEIAKELGIKKAIGAVVNGELWDLKRPIENDCELRLVT. The segment at 240 to 531 is catalytic; the sequence is DHRKLGPQLE…LIEHFAGAFP (292 aa). Residues Cys-332, His-383, and His-508 each contribute to the Zn(2+) site.

It belongs to the class-II aminoacyl-tRNA synthetase family. Homodimer. Requires Zn(2+) as cofactor.

It localises to the cytoplasm. It carries out the reaction tRNA(Thr) + L-threonine + ATP = L-threonyl-tRNA(Thr) + AMP + diphosphate + H(+). Its function is as follows. Catalyzes the attachment of threonine to tRNA(Thr) in a two-step reaction: L-threonine is first activated by ATP to form Thr-AMP and then transferred to the acceptor end of tRNA(Thr). Also edits incorrectly charged L-seryl-tRNA(Thr). In Thermotoga maritima (strain ATCC 43589 / DSM 3109 / JCM 10099 / NBRC 100826 / MSB8), this protein is Threonine--tRNA ligase.